Consider the following 127-residue polypeptide: Small ribosomal subunit protein uS11 (127 aa).

It belongs to the universal ribosomal protein uS11 family. Part of the 30S ribosomal subunit. Interacts with proteins S7 and S18. Binds to IF-3.

Located on the platform of the 30S subunit, it bridges several disparate RNA helices of the 16S rRNA. Forms part of the Shine-Dalgarno cleft in the 70S ribosome. This is Small ribosomal subunit protein uS11 from Rickettsia rickettsii (strain Iowa).